A 120-amino-acid polypeptide reads, in one-letter code: Small ribosomal subunit protein eS24 (120 aa).

Residues 101–120 (RDAGTKQKKGGSKGGQGAKG) form a disordered region.

The protein belongs to the eukaryotic ribosomal protein eS24 family.

In Saccharolobus islandicus (strain M.16.27) (Sulfolobus islandicus), this protein is Small ribosomal subunit protein eS24.